The sequence spans 160 residues: Flavodoxin (160 aa).

One can recognise a Flavodoxin-like domain in the interval 3–153 (ISILYSSKTG…NARIFGERIA (151 aa)).

Belongs to the flavodoxin family. Requires FMN as cofactor.

Low-potential electron donor to a number of redox enzymes. The protein is Flavodoxin (floX) of Clostridium saccharobutylicum.